We begin with the raw amino-acid sequence, 106 residues long: UPF0145 protein Fphi_1781 (106 aa).

This sequence belongs to the UPF0145 family.

This chain is UPF0145 protein Fphi_1781, found in Francisella philomiragia subsp. philomiragia (strain ATCC 25017 / CCUG 19701 / FSC 153 / O#319-036).